The primary structure comprises 170 residues: Mitotic-spindle organizing protein 2B (170 aa).

2 disordered regions span residues 1–26 (MSRG…SPDA) and 102–170 (SADS…GSST). Positions 8–20 (GSQAMASSQAAGP) are enriched in low complexity. A compositionally biased stretch (polar residues) spans 123 to 132 (PNPTTSTTQG). Residues 151–170 (SGSRMQKSSSSGKSSGGSST) are compositionally biased toward low complexity.

Belongs to the MOZART2 family. Part of the gamma-tubulin complex. Interacts with TUBG1.

It is found in the cytoplasm. It localises to the cytoskeleton. The protein resides in the microtubule organizing center. The protein localises to the centrosome. Its subcellular location is the spindle. This is Mitotic-spindle organizing protein 2B (mzt2b) from Xenopus tropicalis (Western clawed frog).